A 385-amino-acid chain; its full sequence is ATP phosphoribosyltransferase regulatory subunit (385 aa).

It belongs to the class-II aminoacyl-tRNA synthetase family. HisZ subfamily. Heteromultimer composed of HisG and HisZ subunits.

It localises to the cytoplasm. Its pathway is amino-acid biosynthesis; L-histidine biosynthesis; L-histidine from 5-phospho-alpha-D-ribose 1-diphosphate: step 1/9. In terms of biological role, required for the first step of histidine biosynthesis. May allow the feedback regulation of ATP phosphoribosyltransferase activity by histidine. In Bordetella pertussis (strain Tohama I / ATCC BAA-589 / NCTC 13251), this protein is ATP phosphoribosyltransferase regulatory subunit.